A 149-amino-acid polypeptide reads, in one-letter code: Myosin, essential light chain (149 aa).

EF-hand domains are found at residues 7 to 42 (SMID…FGLN) and 79 to 114 (GSYE…LGEK).

As to quaternary structure, myosin is a hexamer of 2 heavy chains and 4 light chains (two regulatory light chains and two essential light chains).

The protein is Myosin, essential light chain of Branchiostoma floridae (Florida lancelet).